The primary structure comprises 216 residues: Probable phosphatase SPAC513.02 (216 aa).

His-15 serves as the catalytic Tele-phosphohistidine intermediate.

This sequence belongs to the phosphoglycerate mutase family. BPG-dependent PGAM subfamily.

It localises to the cytoplasm. The protein localises to the nucleus. This chain is Probable phosphatase SPAC513.02, found in Schizosaccharomyces pombe (strain 972 / ATCC 24843) (Fission yeast).